Consider the following 169-residue polypeptide: Large ribosomal subunit protein uL10 (169 aa).

It belongs to the universal ribosomal protein uL10 family. In terms of assembly, part of the ribosomal stalk of the 50S ribosomal subunit. The N-terminus interacts with L11 and the large rRNA to form the base of the stalk. The C-terminus forms an elongated spine to which L12 dimers bind in a sequential fashion forming a multimeric L10(L12)X complex.

Functionally, forms part of the ribosomal stalk, playing a central role in the interaction of the ribosome with GTP-bound translation factors. In Staphylococcus saprophyticus subsp. saprophyticus (strain ATCC 15305 / DSM 20229 / NCIMB 8711 / NCTC 7292 / S-41), this protein is Large ribosomal subunit protein uL10.